A 314-amino-acid chain; its full sequence is Ketimine reductase mu-crystallin (314 aa).

R47 is a 3,3',5-triiodo-L-thyronine binding site. The NADPH site is built by D82, H92, R119, A144, V146, Q147, N168, R169, T170, N173, T205, L206, V226, and A228. Residue E257 coordinates 3,3',5-triiodo-L-thyronine. S292 is an NADPH binding site.

Belongs to the ornithine cyclodeaminase/mu-crystallin family. As to quaternary structure, homodimer. Binds the thyroid hormone triiodothyronine (T3); T3 binding inhibits enzymatic activity. In terms of tissue distribution, expressed in neural tissues, muscle and kidney. Expressed in the inner ear.

The protein resides in the cytoplasm. The enzyme catalyses L-pipecolate + NADP(+) = Delta(1)-piperideine-2-carboxylate + NADPH + H(+). It carries out the reaction L-pipecolate + NAD(+) = Delta(1)-piperideine-2-carboxylate + NADH + H(+). The catalysed reaction is L-proline + NADP(+) = 1-pyrroline-2-carboxylate + NADPH + H(+). It catalyses the reaction L-proline + NAD(+) = 1-pyrroline-2-carboxylate + NADH + H(+). The enzyme catalyses (3R)-1,4-thiomorpholine-3-carboxylate + NAD(+) = 3,4-dehydrothiomorpholine-3-carboxylate + NADH + 2 H(+). It carries out the reaction (3R)-1,4-thiomorpholine-3-carboxylate + NADP(+) = 3,4-dehydrothiomorpholine-3-carboxylate + NADPH + 2 H(+). The catalysed reaction is (S)-cystathionine ketimine + NADH + 2 H(+) = (3R,5S)-2,3,5,6,7-pentahydro-1,4-thiazepine-3,5-dicarboxylate + NAD(+). It catalyses the reaction (S)-cystathionine ketimine + NADPH + 2 H(+) = (3R,5S)-2,3,5,6,7-pentahydro-1,4-thiazepine-3,5-dicarboxylate + NADP(+). The enzyme catalyses (R)-lanthionine ketimine + NADPH + 2 H(+) = (3R,5R)-1,4-thiomorpholine-3,5-dicarboxylate + NADP(+). It carries out the reaction Delta(2)-thiazoline-2-carboxylate + NADPH + 2 H(+) = L-thiazolidine-2-carboxylate + NADP(+). With respect to regulation, inhibited by thyroid hormones triiodothyronine (T3) and thyroxine (T4). In terms of biological role, catalyzes the NAD(P)H-dependent reduction of imine double bonds of a number of cyclic ketimine substrates, including sulfur-containing cyclic ketimines. Under physiological conditions, it efficiently catalyzes delta(1)-piperideine-2-carboxylate (P2C) and delta(1)-pyrroline-2-carboxylate (Pyr2C) reduction, suggesting a central role in lysine and glutamate metabolism. Additional substrates are delta(2)-thiazoline-2-carboxylate (T2C), 3,4-dehydrothiomorpholine-3-carboxylate (AECK), and (R)-lanthionine ketimine (LK) that is reduced at very low rate compared to other substrates. Also catalyzes the NAD(P)H-dependent reduction of (S)-cystathionine ketimine (CysK). This chain is Ketimine reductase mu-crystallin, found in Homo sapiens (Human).